A 707-amino-acid polypeptide reads, in one-letter code: Eomesodermin homolog (707 aa).

A compositionally biased stretch (gly residues) spans 27–42 (GGGGGGGGGGGGGGGS). A disordered region spans residues 27 to 125 (GGGGGGGGGG…GSPCAEEELP (99 aa)). Positions 73 to 93 (AGSAEPAGAGAGAPAAMLSDA) are enriched in low complexity. Serine 117 carries the post-translational modification Phosphoserine. The T-box DNA-binding region spans 278-458 (LWLKFHRHQT…HNPFAKGFRD (181 aa)). Threonine 473 carries the post-translational modification Phosphothreonine. The interval 592-707 (AMAGWGGRGA…GAYYAFYTSP (116 aa)) is required for transcription activation. A disordered region spans residues 642–689 (TPPSIKSLDSSDSGVYNSACKRKRLSPSTPSNGNSPPIKCEDINTEEY). The span at 648–657 (SLDSSDSGVY) shows a compositional bias: polar residues. Over residues 667–678 (SPSTPSNGNSPP) the composition is skewed to low complexity. Basic and acidic residues predominate over residues 680 to 689 (KCEDINTEEY).

As to expression, expressed in CD8+ T-cells.

It is found in the nucleus. Functions as a transcriptional activator playing a crucial role during development. Functions in trophoblast differentiation and later in gastrulation, regulating both mesoderm delamination and endoderm specification. Plays a role in brain development being required for the specification and the proliferation of the intermediate progenitor cells and their progeny in the cerebral cortex. Required for differentiation and migration of unipolar dendritic brush cells. Also involved in the differentiation of CD8+ T-cells during immune response regulating the expression of lytic effector genes. This chain is Eomesodermin homolog (Eomes), found in Mus musculus (Mouse).